Consider the following 477-residue polypeptide: UDP-glycosyltransferase 71K1 (477 aa).

Residues S285, 350 to 351 (WA), 368 to 376 (HCGWNSILE), and 390 to 393 (YAEQ) each bind UDP-alpha-D-glucose.

Belongs to the UDP-glycosyltransferase family.

In terms of biological role, glycosyltransferase that possesses chalcone and flavonol 2'-O-glycosyltransferase activity. Converts phloretin to phlorizin (phloretin 2'-O-glucoside), a potent antioxidant. Possesses glycosyltransferase activity toward quercetin, isoliquiritigenin, butein and caffeic acid. The chain is UDP-glycosyltransferase 71K1 from Malus domestica (Apple).